Reading from the N-terminus, the 110-residue chain is Iron-sulfur cluster assembly protein CyaY (110 aa).

The protein belongs to the frataxin family.

Involved in iron-sulfur (Fe-S) cluster assembly. May act as a regulator of Fe-S biogenesis. The chain is Iron-sulfur cluster assembly protein CyaY from Pseudomonas syringae pv. tomato (strain ATCC BAA-871 / DC3000).